The sequence spans 269 residues: Aquaporin-1 (269 aa).

The Cytoplasmic segment spans residues 1-11 (MASEIKKKLFW). A helical membrane pass occupies residues 12–29 (RAVVAEFLAMTLFVFISI). Residues 30 to 46 (GSALGFNYPLERNQTLV) are Extracellular-facing. N42 is a glycosylation site (N-linked (GlcNAc...) asparagine). Residues 47-65 (QDNVKVSLAFGLSIATLAQ) traverse the membrane as a helical segment. The Cytoplasmic segment spans residues 66–68 (SVG). An intramembrane segment occupies 69 to 82 (HISGAHLNPAVTLG). Residues 76 to 78 (NPA) carry the NPA 1 motif. Residues 83 to 90 (LLLSCQIS) lie on the Cytoplasmic side of the membrane. Residues 91 to 109 (ILRAVMYIIAQCVGAIVAS) traverse the membrane as a helical segment. Topologically, residues 110-133 (AILSGITSSLLENSLGRNDLARGV) are extracellular. Residues 134–153 (NSGQGLGIEIIGTLQLVLCV) traverse the membrane as a helical segment. At 154 to 163 (LATTDRRRRD) the chain is on the cytoplasmic side. Residues 164–181 (LGGSAPLAIGLSVALGHL) form a helical membrane-spanning segment. Residues 182-186 (LAIDY) lie on the Extracellular side of the membrane. Residues 187–199 (TGCGINPARSFGS) lie within the membrane without spanning it. The NPA 2 motif lies at 192–194 (NPA). At 200–206 (AVLTRNF) the chain is on the extracellular side. A glycan (N-linked (GlcNAc...) asparagine) is linked at N205. A helical membrane pass occupies residues 207-224 (SNHWIFWVGPFIGSALAV). Topologically, residues 225–269 (LIYDFILAPRSSDFTDRMKVWTSGQVEEYDLDADDINSRVEMKPK) are cytoplasmic. The residue at position 247 (S247) is a Phosphoserine. A Phosphotyrosine modification is found at Y253. S262 bears the Phosphoserine mark.

Belongs to the MIP/aquaporin (TC 1.A.8) family. Homotetramer; each monomer provides an independent water pore. Component of the ankyrin-1 complex in the erythrocyte, composed of ANK1, RHCE, RHAG, SLC4A1, EPB42, GYPA, GYPB and AQP1. Interacts with EPHB2; involved in endolymph production in the inner ear. Identified in a complex with STOM. Interacts (via the N-terminal) with ANK1 (via ANK 1-5 repeats). Interacts (via the C-terminal) with EPB42. As to expression, erythrocytes and renal tubules.

The protein localises to the cell membrane. The enzyme catalyses H2O(in) = H2O(out). The catalysed reaction is nitric oxide(out) = nitric oxide(in). It catalyses the reaction CO2(out) = CO2(in). It carries out the reaction glycerol(in) = glycerol(out). The enzyme catalyses H2O2(out) = H2O2(in). The catalysed reaction is K(+)(in) = K(+)(out). It catalyses the reaction Na(+)(in) = Na(+)(out). Forms a water channel that facilitates the transport of water across cell membranes, playing a crucial role in water homeostasis in various tissues. Could also be permeable to small solutes including hydrogen peroxide, glycerol and gases such as amonnia (NH3), nitric oxide (NO) and carbon dioxide (CO2). Recruited to the ankyrin-1 complex, a multiprotein complex of the erythrocyte membrane, it could be part of a CO2 metabolon, linking facilitated diffusion of CO2 across the membrane, anion exchange of Cl(-)/HCO3(-) and interconversion of dissolved CO2 and carbonic acid in the cytosol. In vitro, it shows non-selective gated cation channel activity and may be permeable to cations like K(+) and Na(+) in vivo. In Rattus norvegicus (Rat), this protein is Aquaporin-1.